The primary structure comprises 363 residues: Dihydroorotate dehydrogenase (quinone) (363 aa).

FMN-binding positions include 70 to 74 (AGFDK) and T94. K74 serves as a coordination point for substrate. A substrate-binding site is contributed by 119–123 (NRMGF). Residues N147 and N180 each contribute to the FMN site. Residue N180 coordinates substrate. Catalysis depends on S183, which acts as the Nucleophile. N185 lines the substrate pocket. Residues K216 and T244 each coordinate FMN. Substrate is bound at residue 245 to 246 (NT). Residues G270, G299, and 320 to 321 (YT) each bind FMN.

It belongs to the dihydroorotate dehydrogenase family. Type 2 subfamily. As to quaternary structure, monomer. It depends on FMN as a cofactor.

It localises to the cell membrane. The enzyme catalyses (S)-dihydroorotate + a quinone = orotate + a quinol. It functions in the pathway pyrimidine metabolism; UMP biosynthesis via de novo pathway; orotate from (S)-dihydroorotate (quinone route): step 1/1. Its function is as follows. Catalyzes the conversion of dihydroorotate to orotate with quinone as electron acceptor. The chain is Dihydroorotate dehydrogenase (quinone) from Corynebacterium diphtheriae (strain ATCC 700971 / NCTC 13129 / Biotype gravis).